The sequence spans 242 residues: MVATAEGEPGLTDALARLAGSGRADMPDLELLPGSYDLPGARLLDVVEVMDRIRLACPWSARRTHHDLVKYGVEEMYELVDAIEAGDRGELREELGDVLLQVVFHARIAQDDADEPFAIDDVAGTLVTKLVHRHPHVFGDDVAETAADVEAHWRRRKAEEKHERTSVTEGVPLGQPALALAAKLASRARAAGIAVRPEECGTGVGYRLLEMAVGAEADGVDPESALRAAAHVYRDAIRAAEG.

The protein to E.coli MazG and to plasmid pIP1100 erythromycin esterase.

This is an uncharacterized protein from Streptomyces cacaoi.